Here is a 329-residue protein sequence, read N- to C-terminus: Malate dehydrogenase (329 aa).

An NAD(+)-binding site is contributed by 12-18; sequence GAAGQIC. 2 residues coordinate substrate: arginine 95 and arginine 101. NAD(+) contacts are provided by residues asparagine 108, glutamine 115, and 132–134; that span reads VGN. Asparagine 134 and arginine 165 together coordinate substrate. Histidine 190 serves as the catalytic Proton acceptor.

The protein belongs to the LDH/MDH superfamily. MDH type 2 family. In terms of assembly, homodimer.

The catalysed reaction is (S)-malate + NAD(+) = oxaloacetate + NADH + H(+). Catalyzes the reversible oxidation of malate to oxaloacetate. This Aquaspirillum arcticum protein is Malate dehydrogenase.